Consider the following 356-residue polypeptide: Red-sensitive opsin-2 (356 aa).

Topologically, residues 1 to 48 (MAEWANAAFAARRRGDETTRDNAFSYTNSNNTRDPFEGPNYHIAPRWV) are extracellular. Asn30 carries N-linked (GlcNAc...) asparagine glycosylation. The chain crosses the membrane as a helical span at residues 49–73 (YNVATVWMFFVVVASTFTNGLVLVA). Topologically, residues 74–85 (TAKFKKLRHPLN) are cytoplasmic. A helical membrane pass occupies residues 86 to 111 (WILVNLAIADLGETLFASTISVINQV). The Extracellular segment spans residues 112–125 (FGYFILGHPMCIFE). The cysteines at positions 122 and 199 are disulfide-linked. Residues 126 to 145 (GYTVSVCGIAGLWSLTVISW) traverse the membrane as a helical segment. Residues 146–164 (ERWVVVCKPFGNVKFDGKW) lie on the Cytoplasmic side of the membrane. The chain crosses the membrane as a helical span at residues 165-188 (ASAGIIFSWVWAAVWCAPPIFGWS). The Extracellular segment spans residues 189–214 (RYWPHGLKTSCGPDVFGGNEDPGVQS). The chain crosses the membrane as a helical span at residues 215–242 (YMLVLMITCCILPLAIIILCYIAVFLAI). The Cytoplasmic portion of the chain corresponds to 243-264 (HAVAQQQKDSESTQKAEKEVSR). The helical transmembrane segment at 265-288 (MVVVMILAFCLCWGPYTAFACFAA) threads the bilayer. Residues 289 to 296 (ANPGYAFH) are Extracellular-facing. A helical membrane pass occupies residues 297–321 (PLAAAMPAYFAKSATIYNPIIYVFM). Position 308 is an N6-(retinylidene)lysine (Lys308). Residues 322–356 (NRQFRVCIMQLFGKKVDDGSEVSTSKTEVSSVAPA) lie on the Cytoplasmic side of the membrane.

It belongs to the G-protein coupled receptor 1 family. Opsin subfamily. In terms of processing, phosphorylated on some or all of the serine and threonine residues present in the C-terminal region.

It localises to the membrane. Visual pigments are the light-absorbing molecules that mediate vision. They consist of an apoprotein, opsin, covalently linked to cis-retinal. This Danio rerio (Zebrafish) protein is Red-sensitive opsin-2 (opn1lw2).